The chain runs to 111 residues: Large ribosomal subunit protein eL31 (111 aa).

Belongs to the eukaryotic ribosomal protein eL31 family.

The sequence is that of Large ribosomal subunit protein eL31 (RPL31) from Encephalitozoon cuniculi (strain GB-M1) (Microsporidian parasite).